A 197-amino-acid chain; its full sequence is uncharacterized protein (197 aa).

Disordered regions lie at residues M1–V30 and P115–L174. Residues K21–V30 are compositionally biased toward low complexity. Positions K123–E137 are enriched in acidic residues. Residues K157–S170 are compositionally biased toward basic residues.

This is an uncharacterized protein from Dictyostelium discoideum (Social amoeba).